A 297-amino-acid polypeptide reads, in one-letter code: Acetyl-coenzyme A carboxylase carboxyl transferase subunit beta (297 aa).

Residues 1–23 are disordered; that stretch reads MSWIERILGRTSSSSSSSKSKVP. A CoA carboxyltransferase N-terminal domain is found at 26 to 295; it reads VWTKCTSCEQ…PFKTAELIVE (270 aa). Residues Cys30, Cys33, Cys49, and Cys52 each coordinate Zn(2+). The C4-type zinc-finger motif lies at 30-52; it reads CTSCEQVLYSEELKRNMHVCPKC.

This sequence belongs to the AccD/PCCB family. As to quaternary structure, acetyl-CoA carboxylase is a heterohexamer composed of biotin carboxyl carrier protein (AccB), biotin carboxylase (AccC) and two subunits each of ACCase subunit alpha (AccA) and ACCase subunit beta (AccD). The cofactor is Zn(2+).

The protein localises to the cytoplasm. It catalyses the reaction N(6)-carboxybiotinyl-L-lysyl-[protein] + acetyl-CoA = N(6)-biotinyl-L-lysyl-[protein] + malonyl-CoA. It participates in lipid metabolism; malonyl-CoA biosynthesis; malonyl-CoA from acetyl-CoA: step 1/1. Functionally, component of the acetyl coenzyme A carboxylase (ACC) complex. Biotin carboxylase (BC) catalyzes the carboxylation of biotin on its carrier protein (BCCP) and then the CO(2) group is transferred by the transcarboxylase to acetyl-CoA to form malonyl-CoA. In Actinobacillus pleuropneumoniae serotype 7 (strain AP76), this protein is Acetyl-coenzyme A carboxylase carboxyl transferase subunit beta.